The following is a 237-amino-acid chain: Phosphoribosylaminoimidazole-succinocarboxamide synthase (237 aa).

Belongs to the SAICAR synthetase family.

The enzyme catalyses 5-amino-1-(5-phospho-D-ribosyl)imidazole-4-carboxylate + L-aspartate + ATP = (2S)-2-[5-amino-1-(5-phospho-beta-D-ribosyl)imidazole-4-carboxamido]succinate + ADP + phosphate + 2 H(+). It participates in purine metabolism; IMP biosynthesis via de novo pathway; 5-amino-1-(5-phospho-D-ribosyl)imidazole-4-carboxamide from 5-amino-1-(5-phospho-D-ribosyl)imidazole-4-carboxylate: step 1/2. This is Phosphoribosylaminoimidazole-succinocarboxamide synthase from Halalkalibacterium halodurans (strain ATCC BAA-125 / DSM 18197 / FERM 7344 / JCM 9153 / C-125) (Bacillus halodurans).